We begin with the raw amino-acid sequence, 283 residues long: Phosphatidylglycerol--prolipoprotein diacylglyceryl transferase (283 aa).

A run of 7 helical transmembrane segments spans residues 21–41 (LAVR…LWLA), 60–80 (LLFA…VLFY), 95–115 (VWTG…AMLW), 124–144 (FFTI…AGRL), 176–196 (SQLY…NWFI), 203–223 (GAVS…VEYV), and 239–259 (MGQI…LWAF). A 1,2-diacyl-sn-glycero-3-phospho-(1'-sn-glycerol) is bound at residue Arg143.

Belongs to the Lgt family.

The protein localises to the cell inner membrane. The catalysed reaction is L-cysteinyl-[prolipoprotein] + a 1,2-diacyl-sn-glycero-3-phospho-(1'-sn-glycerol) = an S-1,2-diacyl-sn-glyceryl-L-cysteinyl-[prolipoprotein] + sn-glycerol 1-phosphate + H(+). It participates in protein modification; lipoprotein biosynthesis (diacylglyceryl transfer). In terms of biological role, catalyzes the transfer of the diacylglyceryl group from phosphatidylglycerol to the sulfhydryl group of the N-terminal cysteine of a prolipoprotein, the first step in the formation of mature lipoproteins. In Aliivibrio fischeri (strain MJ11) (Vibrio fischeri), this protein is Phosphatidylglycerol--prolipoprotein diacylglyceryl transferase.